We begin with the raw amino-acid sequence, 53 residues long: MGMSLSHLLIVLLIIFVLFGAGKLPQVMSDLAKGLKAFKDGMKDDGSDNDKNK.

Residues 1–21 (MGMSLSHLLIVLLIIFVLFGA) form a helical membrane-spanning segment.

It belongs to the TatA/E family. The Tat system comprises two distinct complexes: a TatABC complex, containing multiple copies of TatA, TatB and TatC subunits, and a separate TatA complex, containing only TatA subunits. Substrates initially bind to the TatABC complex, which probably triggers association of the separate TatA complex to form the active translocon.

It is found in the cell inner membrane. In terms of biological role, part of the twin-arginine translocation (Tat) system that transports large folded proteins containing a characteristic twin-arginine motif in their signal peptide across membranes. TatA could form the protein-conducting channel of the Tat system. In Rickettsia conorii (strain ATCC VR-613 / Malish 7), this protein is Sec-independent protein translocase protein TatA.